The following is an 83-amino-acid chain: MTARRREAAPAKKRRNLLKSLGIERVDYKDTSTLRQFISERGKIRSRSVTGLTVQQQRQVTTAVKTAREMALLPYPGQNPTGR.

The protein belongs to the bacterial ribosomal protein bS18 family. In terms of assembly, part of the 30S ribosomal subunit. Forms a tight heterodimer with protein bS6.

Functionally, binds as a heterodimer with protein bS6 to the central domain of the 16S rRNA, where it helps stabilize the platform of the 30S subunit. The protein is Small ribosomal subunit protein bS18A of Mycolicibacterium vanbaalenii (strain DSM 7251 / JCM 13017 / BCRC 16820 / KCTC 9966 / NRRL B-24157 / PYR-1) (Mycobacterium vanbaalenii).